We begin with the raw amino-acid sequence, 180 residues long: Large ribosomal subunit protein uL5 (180 aa).

The protein belongs to the universal ribosomal protein uL5 family. As to quaternary structure, part of the 50S ribosomal subunit; part of the 5S rRNA/L5/L18/L25 subcomplex. Contacts the 5S rRNA and the P site tRNA. Forms a bridge to the 30S subunit in the 70S ribosome.

In terms of biological role, this is one of the proteins that bind and probably mediate the attachment of the 5S RNA into the large ribosomal subunit, where it forms part of the central protuberance. In the 70S ribosome it contacts protein S13 of the 30S subunit (bridge B1b), connecting the 2 subunits; this bridge is implicated in subunit movement. Contacts the P site tRNA; the 5S rRNA and some of its associated proteins might help stabilize positioning of ribosome-bound tRNAs. This chain is Large ribosomal subunit protein uL5, found in Limosilactobacillus reuteri (strain DSM 20016) (Lactobacillus reuteri).